The following is a 403-amino-acid chain: Rhomboid-like protein 15 (403 aa).

A run of 5 helical transmembrane segments spans residues 22–42 (IPFLTSSVVVVCGVIYLICLL), 70–90 (AIIFHGSLLHVLFNMMALVPM), 103–123 (LLYLTVLLATTNAVLHLLIAS), 141–161 (AIGFSGILFSMIVIETSLSGV), and 176–196 (LYPWILLIVFQLLMTNVSLLG). Catalysis depends on S145, which acts as the Nucleophile. The Charge relay system role is filled by H197. The helical transmembrane segment at 198–218 (LCGILSGFSYSYGLFNFLMPG) threads the bilayer. The tract at residues 282 to 316 (EASNQSSEDSRFPGRGRTLSTARDPTAPAGETDPN) is disordered. Positions 361 to 401 (AASEEQIQKLVAMGFDRTQVEVALAAADDDLTVAVEILMSQ) constitute a UBA domain.

The protein belongs to the peptidase S54 family.

The protein localises to the membrane. Probable rhomboid-type serine protease that catalyzes intramembrane proteolysis. May function in senescence. In Arabidopsis thaliana (Mouse-ear cress), this protein is Rhomboid-like protein 15.